The sequence spans 478 residues: Transcript termination protein A18 (478 aa).

A Helicase ATP-binding domain is found at 98–254 (KLSTHRPMYM…NDVVNVLKVS (157 aa)). ATP is bound at residue 111 to 118 (LSCGFGKT). Positions 204-207 (DESH) match the DESH box motif. A Helicase C-terminal domain is found at 302-468 (PRNNLIVETV…GIEGTKEEPV (167 aa)).

Belongs to the helicase family. Poxviruses subfamily. In terms of assembly, interacts with G2. Might be part of a transcription complex composed at least of G2, A18, and H5.

It is found in the virion. In terms of biological role, DNA helicase which seems to act as a postreplicative transcription termination factor. Involved in ATP-dependent release of nascent RNA. Forms a stable complex with single-stranded DNA, and to a lesser extent RNA. The protein is Transcript termination protein A18 of Rabbit fibroma virus (strain Kasza) (RFV).